Reading from the N-terminus, the 132-residue chain is Small ribosomal subunit protein bS6 (132 aa).

The tract at residues 99 to 132 (ASPMVKAKDERRGDRREDFANETADDADAGDSEE) is disordered. A compositionally biased stretch (basic and acidic residues) spans 104–117 (KAKDERRGDRREDF). Over residues 121–132 (TADDADAGDSEE) the composition is skewed to acidic residues.

The protein belongs to the bacterial ribosomal protein bS6 family.

In terms of biological role, binds together with bS18 to 16S ribosomal RNA. The protein is Small ribosomal subunit protein bS6 of Serratia proteamaculans (strain 568).